A 1469-amino-acid chain; its full sequence is Chromosome condensation protein dpy-27 (1469 aa).

Positions 1–25 (MQPFKRRALTSDDDRPYADTDSMPE) are disordered. The span at 9-18 (LTSDDDRPYA) shows a compositional bias: basic and acidic residues. 122–129 (GPNGSGKS) lines the ATP pocket. The stretch at 356–542 (ELEENKDIML…KGTLQTMMAE (187 aa)) forms a coiled coil. The SMC hinge domain maps to 621-736 (PGFKGRLGDL…VDSLEEATRI (116 aa)). The tract at residues 758–781 (GALTGGGKPTTGRIRNDNNPNMSG) is disordered. Coiled-coil stretches lie at residues 805–974 (LKLQ…AQLE), 1016–1056 (AYQT…DIIE), and 1159–1182 (TSAKKFSDKLKAHREKLNELRMAR). The interval 1404–1469 (LPEFNRFPPA…VQRRVRRSRH (66 aa)) is disordered. Acidic residues predominate over residues 1439 to 1449 (EEEDEEDELIE).

It belongs to the SMC family. SMC4 subfamily. Component of the dosage compensation complex, which contains the mix-1/SMC2 and dpy-27/SMC4 heterodimer, and three non SMC subunits that probably regulate the complex: dpy-26, capg-1 and dpy-28. Within the complex, interacts with dpy-28, mix-1, dpy-26 and capg-1. Interacts with dpy-21. Interacts with dpy-28; the interaction is required for dpy-28 protein stability and dpy-28 association with the X chromosome. Interacts with smcl-1.

It localises to the nucleus. Its subcellular location is the chromosome. Functionally, central component of the condensin I-like dosage compensation complex that associates specifically with hermaphrodite X chromosomes to reduce their gene transcription throughout development. Its strong similarity with the condensin subunit smc4 suggests that it may reduce the X-chromosome transcript level by condensing the chromatin structure during interphase. Involved in the recruitment of the dosage compensation proteins mix-1 and dpy-21 to the X chromosome. Might be involved in the reduction of histone H4 lysine 16 acetylation (H4K16ac) on dosage compensated X chromosomes. As a member of the dosage compensation complex, also binds to regulatory regions of the autosomal her-1 gene, required for male development, possibly contributing to its repression in hermaphrodites. Also plays a role in the regulation of growth and body fat metabolism downstream of the TOR complex 2 pathway. This is Chromosome condensation protein dpy-27 (dpy-27) from Caenorhabditis elegans.